Consider the following 1479-residue polypeptide: DNA-directed RNA polymerase subunit beta'' (1479 aa).

Positions 220, 296, 303, and 306 each coordinate Zn(2+). Disordered regions lie at residues 618–640 (TRAE…REDE) and 663–756 (LEDE…KKEG). 3 stretches are compositionally biased toward acidic residues: residues 622 to 631 (DSEEEYETLE), 704 to 717 (DEYG…EDEY), and 731 to 749 (LEED…PEED).

It belongs to the RNA polymerase beta' chain family. RpoC2 subfamily. In terms of assembly, in plastids the minimal PEP RNA polymerase catalytic core is composed of four subunits: alpha, beta, beta', and beta''. When a (nuclear-encoded) sigma factor is associated with the core the holoenzyme is formed, which can initiate transcription. The cofactor is Zn(2+).

The protein localises to the plastid. Its subcellular location is the chloroplast. It catalyses the reaction RNA(n) + a ribonucleoside 5'-triphosphate = RNA(n+1) + diphosphate. Functionally, DNA-dependent RNA polymerase catalyzes the transcription of DNA into RNA using the four ribonucleoside triphosphates as substrates. The sequence is that of DNA-directed RNA polymerase subunit beta'' from Triticum aestivum (Wheat).